A 133-amino-acid polypeptide reads, in one-letter code: Large ribosomal subunit protein uL15 (133 aa).

The disordered stretch occupies residues 1-64; the sequence is MGLENLKPAK…QPLQRRLPKI (64 aa).

This sequence belongs to the universal ribosomal protein uL15 family. In terms of assembly, part of the 50S ribosomal subunit.

Functionally, binds to the 23S rRNA. In Helicobacter pylori (strain G27), this protein is Large ribosomal subunit protein uL15.